The sequence spans 231 residues: Putative histone H1.9 (231 aa).

The region spanning 113 to 177 (QKPSTSKVIL…GSAGSFTLGK (65 aa)) is the H15 domain. At S135 the chain carries Phosphoserine. The segment at 177–214 (KKQASKSKLKVKRQRQQRWRSGQRPFGQHRSLLGSKQG) is disordered. Residues 179–194 (QASKSKLKVKRQRQQR) show a composition bias toward basic residues.

The protein belongs to the histone H1/H5 family. Expressed exclusively in the testis.

It is found in the nucleus. The protein localises to the chromosome. DNA-binding protein that may be implicated in chromatin remodeling and/or transcriptional regulation during spermiogenesis, the process of spermatid maturation into spermatozoa. The protein is Putative histone H1.9 of Homo sapiens (Human).